The sequence spans 546 residues: Low-affinity methionine permease (546 aa).

The Extracellular segment spans residues 1 to 70; that stretch reads MEPLLFNSGK…QGRHLGVFST (70 aa). Residues 71–91 form a helical membrane-spanning segment; sequence VVLFVSRIMGSGIFAVPSVIL. The Cytoplasmic segment spans residues 92–98; sequence LNTGGNK. A helical transmembrane segment spans residues 99–119; that stretch reads LIYFAIWVFSAAIAFAGLYLF. Residues 120–148 lie on the Extracellular side of the membrane; the sequence is LEFGSWIPKSGGRKNFLERSFERPRLLIS. The chain crosses the membrane as a helical span at residues 149–169; that stretch reads VVFSCYSVLTGYALTGSIVFG. Topologically, residues 170–188 are cytoplasmic; the sequence is KYVLSAFGVTDDSWSKYVS. A helical membrane pass occupies residues 189-209; that stretch reads ISFIIFAVLIHGVSVRHGVFI. Over 210–213 the chain is Extracellular; the sequence is QNAL. The chain crosses the membrane as a helical span at residues 214 to 234; that stretch reads GGLKLIMIVLMCFAGLYTLFF. Topologically, residues 235 to 254 are cytoplasmic; that stretch reads YKSTGQVAWDLPVTQVEKDS. The chain crosses the membrane as a helical span at residues 255–275; sequence LLSVSSIATAFISSFFCFSGW. Topologically, residues 276 to 297 are extracellular; the sequence is DTVHTVTSEIKNPVKTLKVSGP. A helical membrane pass occupies residues 298-318; that stretch reads LSLIICFVCYTMMNVAYLKVL. Residue T319 is a topological domain, cytoplasmic. Residues 320–340 form a helical membrane-spanning segment; it reads YEEIVSAGPLVGSVLFTKLFG. Topologically, residues 341-346 are extracellular; it reads PRVGGK. The helical transmembrane segment at 347–367 threads the bilayer; the sequence is FIAFSIAISAASNILVVIYSI. At 368–393 the chain is on the cytoplasmic side; sequence SRVNQEIFKEGYLPFSIHMSKNWPFD. Residues 394-414 traverse the membrane as a helical segment; sequence APLPSISLCGFITIAWILILP. At 415-423 the chain is on the extracellular side; it reads KEGESFNYL. A helical transmembrane segment spans residues 424 to 444; it reads VSMDGYGNQFFLLLVAIGLFI. Topologically, residues 445–459 are cytoplasmic; sequence WRFKHKNEVPEIRAS. Residues 460–480 traverse the membrane as a helical segment; sequence TFGVLAIITLSLYMLMAPFFA. The Extracellular segment spans residues 481–494; that stretch reads DPSLNRVGFLPPYQ. The helical transmembrane segment at 495-515 threads the bilayer; the sequence is IMSLLVIVACFFFWLVKFVLL. Over 516–546 the chain is Cytoplasmic; sequence PKFFHYKLLPKITYLHDGLIVTEWVKKPCLC.

The protein to yeast high affinity methionine permease (MUP1).

It localises to the membrane. Very low affinity permease for methionine. This chain is Low-affinity methionine permease (MUP3), found in Saccharomyces cerevisiae (strain ATCC 204508 / S288c) (Baker's yeast).